Here is a 450-residue protein sequence, read N- to C-terminus: Na(+)/H(+) antiporter NhaA 1 (450 aa).

11 helical membrane passes run Ser-35 to Ala-55, Leu-79 to Ile-99, Leu-117 to Trp-137, Ile-143 to Val-163, Ala-173 to Phe-193, Ile-198 to Tyr-218, Pro-224 to His-244, Leu-320 to Asn-340, Ile-356 to Leu-376, Val-392 to Leu-412, and Val-423 to Leu-443.

The protein belongs to the NhaA Na(+)/H(+) (TC 2.A.33) antiporter family.

The protein localises to the cell inner membrane. It carries out the reaction Na(+)(in) + 2 H(+)(out) = Na(+)(out) + 2 H(+)(in). In terms of biological role, na(+)/H(+) antiporter that extrudes sodium in exchange for external protons. This Shewanella denitrificans (strain OS217 / ATCC BAA-1090 / DSM 15013) protein is Na(+)/H(+) antiporter NhaA 1.